The following is a 453-amino-acid chain: uncharacterized protein (453 aa).

The N-terminal stretch at 1 to 23 is a signal peptide; the sequence is MFLLQRFFIYGLFLACFYTTVFG. Topologically, residues 24–137 are lumenal; that stretch reads EKHFEAEEYR…EKQFSYSSGT (114 aa). The helical transmembrane segment at 138–158 threads the bilayer; the sequence is NGILATFLTAIPPNIFILLVP. At 159 to 165 the chain is on the cytoplasmic side; that stretch reads KSFDTSM. A helical membrane pass occupies residues 166-186; that stretch reads LNLFVAVSAGSLLGDVFLQLL. Topologically, residues 187–194 are lumenal; that stretch reads PTVYSTNG. A helical membrane pass occupies residues 195 to 215; the sequence is GDFPASSVYSILIGALVFFLM. The Cytoplasmic segment spans residues 216–358; it reads DKGIRILIHE…LRNGYTKSQV (143 aa). Residues 229-238 show a composition bias toward basic and acidic residues; it reads SLSKPKKDGE. A disordered region spans residues 229-278; the sequence is SLSKPKKDGEETSSVNKPSASSTQTDVKGVEGLRKRNVKDDQNSKGHEPD. A compositionally biased stretch (polar residues) spans 240 to 254; that stretch reads TSSVNKPSASSTQTD. Residues 256–278 show a composition bias toward basic and acidic residues; it reads KGVEGLRKRNVKDDQNSKGHEPD. The helical transmembrane segment at 359–379 threads the bilayer; it reads LVLQMITMVTGLLGAIVATYI. Topologically, residues 380–399 are lumenal; sequence YTASSSSSPYGSFLLQLEDK. Residues 400-420 traverse the membrane as a helical segment; the sequence is LLPFTAGGFLYIAYLGVFPEL. The Cytoplasmic portion of the chain corresponds to 421 to 432; the sequence is LEINLSKGKLGN. The chain crosses the membrane as a helical span at residues 433–453; that stretch reads MIYTALYMMFIVGGFSFLYYV.

Belongs to the ZIP transporter (TC 2.A.5) family. KE4/Catsup subfamily.

It localises to the endoplasmic reticulum membrane. This is an uncharacterized protein from Schizosaccharomyces pombe (strain 972 / ATCC 24843) (Fission yeast).